Reading from the N-terminus, the 304-residue chain is 6-dehydroglucose reductase (304 aa).

The NADP(+) site is built by Trp-28, Arg-29, and Asp-56. The active-site Proton donor is Tyr-61. Residues Tyr-61, His-133, and Arg-134 each contribute to the D-glucose site. 10 residues coordinate NADP(+): Ser-163, Asn-164, Gln-185, Ser-215, Leu-217, Gly-219, Gly-268, Ser-269, Gln-270, and Arg-274.

Belongs to the aldo/keto reductase family.

It carries out the reaction D-glucose + NADP(+) = 6-dehydro-D-glucose + NADPH + H(+). Functionally, part of the alkanesulfonate monooxygenase (sulfo-ASMO) pathway, a D-sulfoquinovose degradation pathway that enables the complete utilization of all carbons within sulfoquinovose (SQ) with concomitant production of inorganic sulfite. Catalyzes the NADP-dependent reduction of 6-dehydro-D-glucose to D-glucose. Can also catalyze the reversible reaction, the formation of 6-dehydro-D-glucose from D-glucose in the presence of NADP(+). This is 6-dehydroglucose reductase from Novosphingobium aromaticivorans (strain ATCC 700278 / DSM 12444 / CCUG 56034 / CIP 105152 / NBRC 16084 / F199).